Here is a 764-residue protein sequence, read N- to C-terminus: Polyribonucleotide nucleotidyltransferase (764 aa).

The Mg(2+) site is built by D555 and D561. The KH domain occupies 621–680; it reads PHITSINIPQNKIGEVIGPKGKTINQITEETGANITIEDDGTVFISAVGGESAREAEEKI. An S1 motif domain is found at 692 to 761; it reads GDRFLGTVVK…NRGKISLVLV (70 aa).

The protein belongs to the polyribonucleotide nucleotidyltransferase family. The cofactor is Mg(2+).

It localises to the cytoplasm. The enzyme catalyses RNA(n+1) + phosphate = RNA(n) + a ribonucleoside 5'-diphosphate. In terms of biological role, involved in mRNA degradation. Catalyzes the phosphorolysis of single-stranded polyribonucleotides processively in the 3'- to 5'-direction. The polypeptide is Polyribonucleotide nucleotidyltransferase (Corynebacterium jeikeium (strain K411)).